We begin with the raw amino-acid sequence, 59 residues long: MIGNTLFDRRMLEALVCPVTQAGLAYDADRQELISKQARLAFPIRDGIPIMLVSEAREL.

It belongs to the UPF0434 family.

This Cereibacter sphaeroides (strain ATCC 17029 / ATH 2.4.9) (Rhodobacter sphaeroides) protein is UPF0434 protein Rsph17029_0141.